The chain runs to 142 residues: Glycine-rich RNA-binding protein 1 (142 aa).

Positions 1 to 65 constitute an RRM domain; that stretch reads NSLHSAFSTY…RNITVNEAQS (65 aa). The tract at residues 48 to 101 is disordered; that stretch reads MNGKELDGRNITVNEAQSRGGRGGGGGGGYGGGRGGGGGYGRRDGGGGGYGGGG. Residues 67–101 are compositionally biased toward gly residues; it reads GGRGGGGGGGYGGGRGGGGGYGRRDGGGGGYGGGG.

In terms of biological role, possibly has a role in RNA transcription or processing during stress. The sequence is that of Glycine-rich RNA-binding protein 1 (GRP1) from Sorghum bicolor (Sorghum).